Reading from the N-terminus, the 93-residue chain is Acylphosphatase (93 aa).

A disulfide bridge links Cys-5 with Cys-49. Positions 5–93 (CIIAWVYGRV…ETLTGFSIRY (89 aa)) constitute an Acylphosphatase-like domain. Residue Asn-38 is part of the active site.

It belongs to the acylphosphatase family.

The catalysed reaction is an acyl phosphate + H2O = a carboxylate + phosphate + H(+). The sequence is that of Acylphosphatase from Salmonella paratyphi A (strain ATCC 9150 / SARB42).